Consider the following 103-residue polypeptide: Large ribosomal subunit protein bL21 (103 aa).

It belongs to the bacterial ribosomal protein bL21 family. Part of the 50S ribosomal subunit. Contacts protein L20.

Functionally, this protein binds to 23S rRNA in the presence of protein L20. This is Large ribosomal subunit protein bL21 from Borreliella afzelii (strain PKo) (Borrelia afzelii).